The following is a 266-amino-acid chain: MTMEVDILELSDRSAKFVLSNVSTAFANGIRRAMVADVPTLAIEYVNLYDNTSVLYDEQLALRLSLIPLATDIETYLPQAECDVCGGEGCPACEVSLTLSAEGPGTVYSRDLISSDPKIQPADPNVPIVELKKGQKLVLEAIAHMGYGRDSVKWQAGVACGYKNMPVITIENCDACGHCAAECPKGIISVEEAGAKIAEEDIMKCSICRLCEQVCDINAIKVDFYENSFVFTMESDGSYTAKDLVLNAANVIKGKAEEMLAILDQL.

[3Fe-4S] cluster is bound by residues Cys-205, Cys-208, and Cys-211.

It belongs to the archaeal Rpo3/eukaryotic RPB3 RNA polymerase subunit family. In terms of assembly, part of the RNA polymerase complex. The cofactor is [3Fe-4S] cluster.

It localises to the cytoplasm. It catalyses the reaction RNA(n) + a ribonucleoside 5'-triphosphate = RNA(n+1) + diphosphate. Its function is as follows. DNA-dependent RNA polymerase (RNAP) catalyzes the transcription of DNA into RNA using the four ribonucleoside triphosphates as substrates. The chain is DNA-directed RNA polymerase subunit Rpo3 from Methanosarcina acetivorans (strain ATCC 35395 / DSM 2834 / JCM 12185 / C2A).